We begin with the raw amino-acid sequence, 184 residues long: ATP synthase subunit b, chloroplastic (184 aa).

The helical transmembrane segment at Leu-27 to Leu-49 threads the bilayer.

It belongs to the ATPase B chain family. As to quaternary structure, F-type ATPases have 2 components, F(1) - the catalytic core - and F(0) - the membrane proton channel. F(1) has five subunits: alpha(3), beta(3), gamma(1), delta(1), epsilon(1). F(0) has four main subunits: a(1), b(1), b'(1) and c(10-14). The alpha and beta chains form an alternating ring which encloses part of the gamma chain. F(1) is attached to F(0) by a central stalk formed by the gamma and epsilon chains, while a peripheral stalk is formed by the delta, b and b' chains.

It is found in the plastid. It localises to the chloroplast thylakoid membrane. In terms of biological role, f(1)F(0) ATP synthase produces ATP from ADP in the presence of a proton or sodium gradient. F-type ATPases consist of two structural domains, F(1) containing the extramembraneous catalytic core and F(0) containing the membrane proton channel, linked together by a central stalk and a peripheral stalk. During catalysis, ATP synthesis in the catalytic domain of F(1) is coupled via a rotary mechanism of the central stalk subunits to proton translocation. Its function is as follows. Component of the F(0) channel, it forms part of the peripheral stalk, linking F(1) to F(0). This chain is ATP synthase subunit b, chloroplastic, found in Arabis hirsuta (Hairy rock-cress).